A 418-amino-acid polypeptide reads, in one-letter code: Putative heat shock protein HSP 90-alpha A4 (418 aa).

Residues Asp-33, Lys-52, Phe-78, and Arg-204 each contribute to the ATP site. 2 disordered regions span residues 255-289 (EDLE…TSAK) and 383-418 (GLGT…RMEK). Residues 265–274 (EKKKQEEGKQ) show a composition bias toward basic and acidic residues.

The protein belongs to the heat shock protein 90 family. As to quaternary structure, homodimer.

The protein resides in the cytoplasm. Functionally, putative molecular chaperone that may promote the maturation, structural maintenance and proper regulation of specific target proteins. The chain is Putative heat shock protein HSP 90-alpha A4 (HSP90AA4P) from Homo sapiens (Human).